We begin with the raw amino-acid sequence, 191 residues long: ATP synthase subunit b (191 aa).

A helical membrane pass occupies residues F10 to I30. A disordered region spans residues R170 to R191.

The protein belongs to the ATPase B chain family. As to quaternary structure, F-type ATPases have 2 components, F(1) - the catalytic core - and F(0) - the membrane proton channel. F(1) has five subunits: alpha(3), beta(3), gamma(1), delta(1), epsilon(1). F(0) has three main subunits: a(1), b(2) and c(10-14). The alpha and beta chains form an alternating ring which encloses part of the gamma chain. F(1) is attached to F(0) by a central stalk formed by the gamma and epsilon chains, while a peripheral stalk is formed by the delta and b chains.

It is found in the cell membrane. Its function is as follows. F(1)F(0) ATP synthase produces ATP from ADP in the presence of a proton or sodium gradient. F-type ATPases consist of two structural domains, F(1) containing the extramembraneous catalytic core and F(0) containing the membrane proton channel, linked together by a central stalk and a peripheral stalk. During catalysis, ATP synthesis in the catalytic domain of F(1) is coupled via a rotary mechanism of the central stalk subunits to proton translocation. Functionally, component of the F(0) channel, it forms part of the peripheral stalk, linking F(1) to F(0). This Acidothermus cellulolyticus (strain ATCC 43068 / DSM 8971 / 11B) protein is ATP synthase subunit b.